Consider the following 353-residue polypeptide: Tetraacyldisaccharide 4'-kinase (353 aa).

66-73 (TVGGTGKT) contacts ATP.

The protein belongs to the LpxK family.

It catalyses the reaction a lipid A disaccharide + ATP = a lipid IVA + ADP + H(+). It functions in the pathway glycolipid biosynthesis; lipid IV(A) biosynthesis; lipid IV(A) from (3R)-3-hydroxytetradecanoyl-[acyl-carrier-protein] and UDP-N-acetyl-alpha-D-glucosamine: step 6/6. In terms of biological role, transfers the gamma-phosphate of ATP to the 4'-position of a tetraacyldisaccharide 1-phosphate intermediate (termed DS-1-P) to form tetraacyldisaccharide 1,4'-bis-phosphate (lipid IVA). This chain is Tetraacyldisaccharide 4'-kinase, found in Geobacter sulfurreducens (strain ATCC 51573 / DSM 12127 / PCA).